The chain runs to 308 residues: Oxygen-dependent coproporphyrinogen-III oxidase (308 aa).

Ser-100 serves as a coordination point for substrate. 2 residues coordinate a divalent metal cation: His-104 and His-114. The active-site Proton donor is the His-114. Residue 116–118 (NFR) participates in substrate binding. A divalent metal cation is bound by residues His-153 and His-183. The important for dimerization stretch occupies residues 248-283 (YVEFNLVFDRGTIFGLQSGGRTESILSSMPPMATWK). Residue 266-268 (GGR) coordinates substrate.

This sequence belongs to the aerobic coproporphyrinogen-III oxidase family. As to quaternary structure, homodimer. A divalent metal cation is required as a cofactor.

The protein localises to the cytoplasm. The catalysed reaction is coproporphyrinogen III + O2 + 2 H(+) = protoporphyrinogen IX + 2 CO2 + 2 H2O. Its pathway is porphyrin-containing compound metabolism; protoporphyrin-IX biosynthesis; protoporphyrinogen-IX from coproporphyrinogen-III (O2 route): step 1/1. Involved in the heme biosynthesis. Catalyzes the aerobic oxidative decarboxylation of propionate groups of rings A and B of coproporphyrinogen-III to yield the vinyl groups in protoporphyrinogen-IX. The protein is Oxygen-dependent coproporphyrinogen-III oxidase of Francisella tularensis subsp. mediasiatica (strain FSC147).